A 261-amino-acid chain; its full sequence is Aromatic peroxygenase (261 aa).

Cys36 provides a ligand contact to heme. N-linked (GlcNAc...) asparagine glycans are attached at residues Asn100, Asn137, Asn141, and Asn220.

The protein belongs to the chloroperoxidase family. Requires heme b as cofactor. Post-translationally, N-glycosylated.

Functionally, aromatic peroxidase that oxidizes aryl alcohols into the corresponding aldehydes and then into the corresponding benzoic acids. Catalyzes the regioselective peroxide-dependent hydroxylation of naphthalene to 1-naphthol and to a far lesser extent 2-naphthol via a naphthalene 1,2-oxide intermediate. Halogenates phenol to 2-bromophenol and 4-bromophenol. Oxidizes the sulfur-containing heterocycle dibenzothiophene to yield sulfoxidation products, and trace amounts of ring-hydroxylation products. The chain is Aromatic peroxygenase from Coprinellus radians (Coprophilous mushroom).